A 503-amino-acid polypeptide reads, in one-letter code: Medium/long-chain-fatty-acid--CoA ligase FadD17 (503 aa).

It belongs to the ATP-dependent AMP-binding enzyme family.

It catalyses the reaction a medium-chain fatty acid + ATP + CoA = a medium-chain fatty acyl-CoA + AMP + diphosphate. It carries out the reaction a long-chain fatty acid + ATP + CoA = a long-chain fatty acyl-CoA + AMP + diphosphate. Its pathway is lipid metabolism; fatty acid biosynthesis. Its function is as follows. Catalyzes the activation of medium/long-chain fatty acids as acyl-coenzyme A (acyl-CoA), which are then transferred to the multifunctional polyketide synthase (PKS) type III for further chain extension. The sequence is that of Medium/long-chain-fatty-acid--CoA ligase FadD17 (fadD17) from Mycobacterium marinum (strain ATCC BAA-535 / M).